We begin with the raw amino-acid sequence, 238 residues long: uncharacterized protein (238 aa).

This is an uncharacterized protein from Ictaluridae (bullhead catfishes).